A 542-amino-acid polypeptide reads, in one-letter code: Probable spastin homolog spas-1 (542 aa).

A coiled-coil region spans residues 29-66 (RAAIEMDELTKQNGTINEKLQTAELYKQARQMLKEANE). The tract at residues 131–177 (ATVPGDKKVSKVKQTEKAPHVCSRGDRCGAHQPPPEKKSTPLKPVNQ) is disordered. The span at 135 to 169 (GDKKVSKVKQTEKAPHVCSRGDRCGAHQPPPEKKS) shows a compositional bias: basic and acidic residues. Residue 309–316 (GPPGNGKT) coordinates ATP.

This sequence belongs to the AAA ATPase family. Spastin subfamily. In terms of assembly, homohexamer. The homohexamer is stabilized by ATP-binding. The homohexamer may adopt a ring conformation through which microtubules pass prior to being severed. Interacts with microtubules.

The protein localises to the cytoplasm. The protein resides in the cytoskeleton. It is found in the perinuclear region. The catalysed reaction is n ATP + n H2O + a microtubule = n ADP + n phosphate + (n+1) alpha/beta tubulin heterodimers.. Severs microtubules, probably in an ATP-dependent fashion. The protein is Probable spastin homolog spas-1 (spas-1) of Caenorhabditis briggsae.